The sequence spans 3011 residues: Genome polyprotein (3011 aa).

Position 2 is an N-acetylserine; by host (Ser2). Positions Ser2–Lys23 are interaction with STAT1. Residues Ser2–Pro58 form an interaction with EIF2AK2/PKR region. Residues Ser2–Arg59 are interaction with DDX3X. The interval Ser2 to Thr75 is disordered. Residues Ser2–Asn168 are Cytoplasmic-facing. Short sequence motifs (nuclear localization signal) lie at residues Pro5–Arg13 and Pro38–Arg43. Residues Pro7–Asn16 are compositionally biased toward basic residues. Low complexity predominate over residues Gly32–Arg47. Position 53 is a phosphoserine; by host (Ser53). 2 short sequence motifs (nuclear localization signal) span residues Pro58–Pro64 and Pro66–Pro71. The span at Pro58–Ala68 shows a compositional bias: basic residues. A Phosphoserine; by host modification is found at Ser99. Positions Pro112–Ala152 are important for endoplasmic reticulum and mitochondrial localization. Ser116 is subject to Phosphoserine; by host PKA. Residues Val122–Ser173 are interaction with APOA2. Positions Tyr164 to Gly167 are important for lipid droplets localization. Residues Leu169–Ala189 traverse the membrane as a helical segment. Residues Leu178–Ala191 constitute a propeptide, ER anchor for the core protein, removed in mature form by host signal peptidase. Residues Ser190–Gly358 lie on the Lumenal side of the membrane. Residues Asn196, Asn209, and Asn234 are each glycosylated (N-linked (GlcNAc...) asparagine; by host). The tract at residues Leu265–Arg296 is important for fusion. Asn305 is a glycosylation site (N-linked (GlcNAc...) asparagine; by host). Residues Ile359 to Ala379 traverse the membrane as a helical segment. Over Gly380–Leu725 the chain is Lumenal. The interval Thr385–Ile411 is HVR1. 4 N-linked (GlcNAc...) (high mannose) asparagine; by host glycosylation sites follow: Asn417, Asn423, Asn430, and Asn448. Cystine bridges form between Cys429/Cys552, Cys452/Cys459, Cys486/Cys494, and Cys503/Cys508. The segment at Tyr474 to Gly479 is HVR2. Asn476 carries an N-linked (GlcNAc...) (high mannose) asparagine; by host glycan. Residues Leu480–Pro493 are CD81-binding 1. Asn532 and Asn540 each carry an N-linked (GlcNAc...) (high mannose) asparagine; by host glycan. The CD81-binding 2 stretch occupies residues Pro544–Gly551. Asn556 carries N-linked (GlcNAc...) (high mannose) asparagine; by host glycosylation. An intrachain disulfide couples Cys564 to Cys569. The N-linked (GlcNAc...) (high mannose) asparagine; by host glycan is linked to Asn576. Cystine bridges form between Cys581/Cys585, Cys597/Cys620, and Cys607/Cys644. Residues Asn623 and Asn645 are each glycosylated (N-linked (GlcNAc...) (high mannose) asparagine; by host). The cysteines at positions 652 and 677 are disulfide-linked. The EIF2AK2/eIF2-alpha phosphorylation homology domain (PePHD) stretch occupies residues Ser660–Gln671. A helical transmembrane segment spans residues Leu726–Ala746. Residues Ala747 to Ala757 are Lumenal-facing. Residues Ser758–Leu778 form a helical membrane-spanning segment. Residues Lys779–Arg781 are Cytoplasmic-facing. Residues Trp782 to Leu803 traverse the membrane as a helical segment. Over Pro804 to Glu813 the chain is Lumenal. The helical transmembrane segment at Val814–Tyr834 threads the bilayer. Residues Tyr835–Tyr838 are Cytoplasmic-facing. A helical transmembrane segment spans residues Ile839–Val859. The Lumenal portion of the chain corresponds to Trp860–His881. A helical transmembrane segment spans residues Pro882–Leu902. The region spanning Leu899 to Leu1026 is the Peptidase C18 domain. Over Gln903–Thr1657 the chain is Cytoplasmic. Positions Ala904–Arg1206 are protease NS2-3. Cys922 is lipidated: S-palmitoyl cysteine; by host. The tract at residues Ala929–Val949 is interaction with host SCPS1. Active-site for protease NS2 activity; shared with dimeric partner residues include His952, Glu972, and Cys993. The Peptidase S29 domain maps to Ala1027 to Pro1208. Active-site charge relay system; for serine protease NS3 activity residues include His1083 and Asp1107. 2 residues coordinate Zn(2+): Cys1123 and Cys1125. The active-site Charge relay system; for serine protease NS3 activity is the Ser1165. Positions 1171 and 1175 each coordinate Zn(2+). The Helicase ATP-binding domain occupies Pro1217–Thr1369. Ala1230 to Ser1237 provides a ligand contact to ATP. Residues Ser1237 and Glu1317 each coordinate Mg(2+). Positions Asp1316–His1319 match the DECH box motif. Residues Gln1486–Gly1497 are RNA-binding. Residues Ser1658–Gly1678 traverse the membrane as a helical segment. The segment at Cys1679–Gly1690 is NS3-binding. At Cys1679–Gln1805 the chain is on the cytoplasmic side. A helical membrane pass occupies residues Thr1806–Gly1824. Topologically, residues Ala1825–Ala1828 are lumenal. The chain crosses the membrane as a helical span at residues Phe1829–Val1849. A glycine zipper region spans residues Gly1833 to Gly1861. Residue Asp1850 is a topological domain, cytoplasmic. The helical transmembrane segment at Ile1851–Gly1871 threads the bilayer. Topologically, residues Glu1872–Asn1881 are lumenal. A helical membrane pass occupies residues Leu1882–Leu1902. At Arg1903–Cys1972 the chain is on the cytoplasmic side. The S-palmitoyl cysteine; by host moiety is linked to residue Cys1968. Residue Cys1972 is the site of S-palmitoyl cysteine; by host; partial attachment. An intramembrane segment occupies Ser1973 to Leu2003. Residues Arg1978–Lys1998 are membrane-binding. The Cytoplasmic portion of the chain corresponds to Pro2004 to Arg2990. The segment at Gly2005–Ser2221 is D1; RNA-binding. 4 residues coordinate Zn(2+): Cys2011, Cys2029, Cys2031, and Cys2052. The FKBP8-binding stretch occupies residues Glu2120–Ala2208. Residues Glu2120 to Thr2332 are transcriptional activation. Residues Pro2135 to Pro2139 are interaction with non-structural protein 4A. An interaction with host SKP2 region spans residues Arg2189–Leu2441. Ser2194 is modified (phosphoserine; by host; in p56). Position 2197 is a phosphoserine; by host; in p58 (Ser2197). Phosphoserine; by host; in p56 and p58, regulates intracellular NS5A distribution is present on Ser2201. Phosphoserine; by host; in p58 is present on residues Ser2204, Ser2207, and Ser2210. Residues Ser2210–Lys2249 are ISDR. The interval Ser2210 to Leu2275 is interaction with EIF2AK2/PKR. Residues Asp2223–Pro2315 are D2. Residues Ala2224–Pro2315 are disordered. An NS4B-binding region spans residues Lys2249 to Tyr2306. The interaction with human PPIA/CYPA stretch occupies residues Phe2281–Leu2297. Over residues Pro2315–Pro2326 the composition is skewed to pro residues. At Ser2321 the chain carries Phosphoserine; by host. Residues Pro2322 to Pro2325 carry the SH3-binding motif. The Nuclear localization signal motif lies at Pro2326–Val2334. Residues Lys2329–Cys2420 are D3. Residues Thr2332 to Leu2441 are interaction with host IFI27. The segment at Glu2346–Ser2409 is disordered. Over residues Thr2349 to Ser2369 the composition is skewed to low complexity. Residue Lys2350 forms a Glycyl lysine isopeptide (Lys-Gly) (interchain with G-Cter in ubiquitin) linkage. Residues Ser2354–Pro2377 form a V3 region. The segment at Thr2367–Val2417 is interaction with host VAPB. A phosphoserine; by host mark is found at Ser2449 and Ser2462. The 119-residue stretch at Pro2634 to Asp2752 folds into the RdRp catalytic domain. Mg(2+) contacts are provided by Asp2640, Asp2738, and Asp2739. A helical transmembrane segment spans residues Trp2991–Arg3011.

This sequence belongs to the hepacivirus polyprotein family. In terms of assembly, homooligomer. Interacts with E1 (via C-terminus). Interacts with the non-structural protein 5A. Interacts (via N-terminus) with host STAT1 (via SH2 domain); this interaction results in decreased STAT1 phosphorylation and ubiquitin-mediated proteasome-dependent STAT1 degradation, leading to decreased IFN-stimulated gene transcription. Interacts with host STAT3; this interaction constitutively activates STAT3. Associates with host LTBR receptor. Interacts with host TNFRSF1A receptor and possibly induces apoptosis. Interacts with host HNRPK. Interacts with host YWHAE. Interacts with host UBE3A/E6AP. Interacts with host DDX3X. Interacts with host APOA2. Interacts with host RXRA protein. Interacts with host SP110 isoform 3/Sp110b; this interaction sequesters the transcriptional corepressor SP110 away from the nucleus. Interacts with host CREB3 nuclear transcription protein; this interaction triggers cell transformation. Interacts with host ACY3. Interacts with host C1QR1. Interacts with host RBM24; this interaction, which enhances the interaction of the mature core protein with 5'-UTR, may inhibit viral translation and favor replication. Interacts (via N-terminus) with host EIF2AK2/PKR (via N-terminus); this interaction induces the autophosphorylation of EIF2AK2. Part of the viral assembly initiation complex composed of NS2, E1, E2, NS3, NS4A, NS5A and the mature core protein. As to quaternary structure, forms a heterodimer with envelope glycoprotein E2. Interacts with mature core protein. Interacts with protease NS2. The heterodimer E1/E2 interacts with host CLDN1; this interaction plays a role in viral entry into host cell. Interacts with host SPSB2 (via C-terminus). Part of the viral assembly initiation complex composed of NS2, E1, E2, NS3, NS4A, NS5A and the mature core protein. Interacts with host NEURL3; this interaction prevents E1 binding to glycoprotein E2. Forms a heterodimer with envelope glycoprotein E1. Interacts with host CD81 and SCARB1 receptors; these interactions play a role in viral entry into host cell. Interacts with host EIF2AK2/PKR; this interaction inhibits EIF2AK2 and probably allows the virus to evade the innate immune response. Interacts with host CD209/DC-SIGN and CLEC4M/DC-SIGNR. Interact with host SPCS1; this interaction is essential for viral particle assembly. Interacts with protease NS2. The heterodimer E1/E2 interacts with host CLDN1; this interaction plays a role in viral entry into host cell. Part of the viral assembly initiation complex composed of NS2, E1, E2, NS3, NS4A, NS5A and the mature core protein. Interacts with host SLC3A2/4F2hc; the interaction may facilitate viral entry into host cell. Interacts with human PLSCR1. In terms of assembly, homohexamer. Homoheptamer. Interacts with protease NS2. As to quaternary structure, homodimer. Interacts with host SPCS1; this interaction is essential for viral particle assembly. Interacts with envelope glycoprotein E1. Interacts with envelope glycoprotein E2. Interacts with viroporin p7. Interacts with serine protease/helicase NS3. Part of the replication complex composed of NS2, NS3, NS4A, NS4B, NS5A and the RNA-directed RNA polymerase embedded in an ER-derived membranous web. Part of the viral assembly initiation complex composed of NS2, E1, E2, NS3, NS4A, NS5A and the mature core protein. Interacts with protease NS2. Interacts with non-structural protein 4A; this interaction stabilizes the folding of NS3 serine protease. NS3-NS4A interaction is essential for NS3 activation and allows membrane anchorage of the latter. NS3/NS4A complex also prevents phosphorylation of host IRF3, thus preventing the establishment of dsRNA induced antiviral state. Interacts with host MAVS; this interaction leads to the cleavage and inhibition of host MAVS. Interacts with host TICAM1; this interaction leads to the cleavage and inhibition of host TICAM1. Interacts with host TANK-binding kinase/TBK1; this interaction results in the inhibition of the association between TBK1 and IRF3, which leads to the inhibition of IRF3 activation. Interacts with host RBM24. Part of the replication complex composed of NS2, NS3, NS4A, NS4B, NS5A and the RNA-directed RNA polymerase embedded in an ER-derived membranous web. Part of the viral assembly initiation complex composed of NS2, E1, E2, NS3, NS4A, NS5A and the mature core protein. In terms of assembly, interacts with NS3 serine protease; this interaction stabilizes the folding of NS3 serine protease. NS3-NS4A interaction is essential for NS3 activation and allows membrane anchorage of the latter. Interacts with non-structural protein 5A (via N-terminus). Part of the replication complex composed of NS2, NS3, NS4A, NS4B, NS5A and the RNA-directed RNA polymerase embedded in an ER-derived membranous web. Part of the viral assembly initiation complex composed of NS2, E1, E2, NS3, NS4A, NS5A and the mature core protein. As to quaternary structure, homomultimer. Interacts with non-structural protein NS5A. Interacts with host PLA2G4C; this interaction likely initiates the recruitment of replication complexes to lipid droplets. Interacts with host STING; this interaction disrupts the interaction between STING and TBK1 thereby suppressing the interferon signaling. Interacts with host METTL22; this interaction may promote the recruitment of NS4B in the proximity of lipid droplet. Part of the replication complex composed of NS2, NS3, NS4A, NS4B, NS5A and the RNA-directed RNA polymerase embedded in an ER-derived membranous web. Monomer. Homodimer; dimerization is required for RNA-binding. Interacts with the mature core protein. Interacts (via N-terminus) with non-structural protein 4A. Interacts with non-structural protein 4B. Interacts (via region D2) with RNA-directed RNA polymerase. Part of the viral assembly initiation complex composed of NS2, E1, E2, NS3, NS4A, NS5A and the mature core protein. Part of the replication complex composed of NS2, NS3, NS4A, NS4B, NS5A and the RNA-directed RNA polymerase embedded in an ER-derived membranous web. Interacts with host GRB2. Interacts with host BIN1. Interacts with host PIK3R1. Interacts with host SRCAP. Interacts with host FKBP8. Interacts (via C-terminus) with host VAPB (via MSP domain). Interacts with host EIF2AK2/PKR; this interaction leads to disruption of EIF2AK2 dimerization by NS5A and probably allows the virus to evade the innate immune response. Interacts (via N-terminus) with host PACSIN2 (via N-terminus); this interaction attenuates protein kinase C alpha-mediated phosphorylation of PACSIN2 by disrupting the interaction between PACSIN2 and PRKCA. Interacts (via N-terminus) with host SRC kinase (via SH2 domain). Interacts with most Src-family kinases. Interacts with host IFI27 and SKP2; promotes the ubiquitin-mediated proteasomal degradation of NS5A. Interacts with host GPS2. Interacts with host TNFRSF21; this interaction allows the modulation by the virus of JNK, p38 MAPK, STAT3, and Akt signaling pathways in a DR6-dependent manner. Interacts (via N-terminus) with host CIDEB (via N-terminus); this interaction seems to regulate the association of HCV particles with APOE. Interacts with host CHKA/Choline Kinase-alpha; CHKA bridges host PI4KA and NS5A and potentiates NS5A-stimulated PI4KA activity, which then facilitates the targeting of the ternary complex to the ER for viral replication. Interacts with host SPSB2 (via C-terminus); this interaction targets NS5A for ubiquitination and degradation. Interacts with host RAB18; this interaction may promote the association of NS5A and other replicase components with lipid droplets. Interacts (via region D2) with host PPIA/CYPA; the interaction stimulates RNA-binding ability of NS5A and is dependent on the peptidyl-prolyl cis-trans isomerase activity of PPIA/CYPA. Interacts with host TRIM14; this interaction induces the degradation of NS5A. In terms of assembly, homooligomer. Interacts with non-structural protein 5A. Interacts with host VAPB. Interacts with host PRK2/PKN2. Interacts with host HNRNPA1 and SEPT6; these interactions facilitate the viral replication. Part of the replication complex composed of NS2, NS3, NS4A, NS4B, NS5A and the RNA-directed RNA polymerase embedded in an ER-derived membranous web. Zn(2+) is required as a cofactor. Requires Mg(2+) as cofactor. In terms of processing, specific enzymatic cleavages in vivo yield mature proteins. The structural proteins, core, E1, E2 and p7 are produced by proteolytic processing by host signal peptidases. The core protein precursor is synthesized as a 23 kDa, which is retained in the ER membrane through the hydrophobic signal peptide. Cleavage by the signal peptidase releases the 21 kDa mature core protein. The cleavage of the core protein precursor occurs between aminoacids 176 and 188 but the exact cleavage site is not known. Some degraded forms of the core protein appear as well during the course of infection. The other proteins (p7, NS2, NS3, NS4A, NS4B, NS5A and NS5B) are cleaved by the viral proteases. Autoprocessing between NS2 and NS3 is mediated by the NS2 cysteine protease catalytic domain and regulated by the NS3 N-terminal domain. Post-translationally, phosphorylated by host PKC and PKA. Ubiquitinated; mediated by UBE3A and leading to core protein subsequent proteasomal degradation. In terms of processing, highly N-glycosylated. Post-translationally, palmitoylation is required for NS2/3 autoprocessing and E2 recruitment to membranes. Palmitoylated. This modification may play a role in its polymerization or in protein-protein interactions. In terms of processing, cleaved by host caspases which are probably activated by the viral infection. Post-translationally, ubiquitinated. Ubiquitination, most probably at Lys-2350, mediated by host IFI27 and SKP2 leads to proteasomal degradation, restricting viral infection. Ubiquitination by host TRIM22 leads to interruption of viral replication. Phosphorylated on serines in a basal form termed p56. p58 is a hyperphosphorylated form of p56. p56 and p58 coexist in the cell in roughly equivalent amounts. Hyperphosphorylation is dependent on the presence of NS4A. Host CSNK1A1/CKI-alpha, PI4KA or RPS6KB1 kinases may be responsible for NS5A phosphorylation. Phosphorylated NS5A is involved in viral replication. In terms of processing, tyrosine phosphorylation is essential for the interaction with host SRC. Post-translationally, the N-terminus is phosphorylated by host PRK2/PKN2.

It is found in the host endoplasmic reticulum membrane. The protein resides in the host mitochondrion membrane. It localises to the virion. The protein localises to the host cytoplasm. Its subcellular location is the host nucleus. It is found in the host lipid droplet. The protein resides in the virion membrane. It localises to the host mitochondrion. The protein localises to the host cell membrane. Its subcellular location is the host perinuclear region. It carries out the reaction Hydrolysis of four peptide bonds in the viral precursor polyprotein, commonly with Asp or Glu in the P6 position, Cys or Thr in P1 and Ser or Ala in P1'.. The enzyme catalyses a ribonucleoside 5'-triphosphate + H2O = a ribonucleoside 5'-diphosphate + phosphate + H(+). It catalyses the reaction ATP + H2O = ADP + phosphate + H(+). The catalysed reaction is RNA(n) + a ribonucleoside 5'-triphosphate = RNA(n+1) + diphosphate. Inhibited by the antiviral drug hexamethylene amiloride. Inhibited by amantadine. Inhibition by amantadine appears to be genotype-dependent. Also inhibited by long-alkyl-chain iminosugar derivatives. With respect to regulation, activity is up-regulated by PRK2/PKN2-mediated phosphorylation. Packages viral RNA to form a viral nucleocapsid, and promotes virion budding. Participates in the viral particle production as a result of its interaction with the non-structural protein 5A. Binds RNA and may function as a RNA chaperone to induce the RNA structural rearrangements taking place during virus replication. Modulates viral translation initiation by interacting with viral IRES and 40S ribosomal subunit. Affects various cell signaling pathways, host immunity and lipid metabolism. Prevents the establishment of cellular antiviral state by blocking the interferon-alpha/beta (IFN-alpha/beta) and IFN-gamma signaling pathways and by blocking the formation of phosphorylated STAT1 and promoting ubiquitin-mediated proteasome-dependent degradation of STAT1. Activates STAT3 leading to cellular transformation. Regulates the activity of cellular genes, including c-myc and c-fos. May repress the promoter of p53, and sequester CREB3 and SP110 isoform 3/Sp110b in the cytoplasm. Represses cell cycle negative regulating factor CDKN1A, thereby interrupting an important check point of normal cell cycle regulation. Targets transcription factors involved in the regulation of inflammatory responses and in the immune response: suppresses NF-kappa-B activation, and activates AP-1. Binds to dendritic cells (DCs) via C1QR1, resulting in down-regulation of T-lymphocytes proliferation. Alters lipid metabolism by interacting with hepatocellular proteins involved in lipid accumulation and storage. Induces up-regulation of FAS promoter activity, and thereby contributes to the increased triglyceride accumulation in hepatocytes (steatosis). In terms of biological role, forms a heterodimer with envelope glycoprotein E2, which mediates virus attachment to the host cell, virion internalization through clathrin-dependent endocytosis and fusion with host membrane. Fusion with the host cell is most likely mediated by both E1 and E2, through conformational rearrangements of the heterodimer required for fusion rather than a classical class II fusion mechanism. E1/E2 heterodimer binds host apolipoproteins such as APOB and APOE thereby forming a lipo-viro-particle (LVP). APOE associated to the LVP allows the initial virus attachment to cell surface receptors such as the heparan sulfate proteoglycans (HSPGs), syndecan-1 (SDC1), syndecan-1 (SDC2), the low-density lipoprotein receptor (LDLR) and scavenger receptor class B type I (SCARB1). The cholesterol transfer activity of SCARB1 allows E2 exposure and binding of E2 to SCARB1 and the tetraspanin CD81. E1/E2 heterodimer binding on CD81 activates the epithelial growth factor receptor (EGFR) signaling pathway. Diffusion of the complex E1/E2-EGFR-SCARB1-CD81 to the cell lateral membrane allows further interaction with Claudin 1 (CLDN1) and occludin (OCLN) to finally trigger HCV entry. Functionally, forms a heterodimer with envelope glycoprotein E1, which mediates virus attachment to the host cell, virion internalization through clathrin-dependent endocytosis and fusion with host membrane. Fusion with the host cell is most likely mediated by both E1 and E2, through conformational rearrangements of the heterodimer required for fusion rather than a classical class II fusion mechanism. The interaction between E2 and host apolipoprotein E/APOE allows the proper assembly, maturation and infectivity of the viral particles. This interaction is probably promoted via the up-regulation of cellular autophagy by the virus. E1/E2 heterodimer binds host apolipoproteins such as APOB and APOE thereby forming a lipo-viro-particle (LVP). APOE associated to the LVP allows the initial virus attachment to cell surface receptors such as the heparan sulfate proteoglycans (HSPGs), syndecan-1 (SDC1), syndecan-1 (SDC2), the low-density lipoprotein receptor (LDLR) and scavenger receptor class B type I (SCARB1). The cholesterol transfer activity of SCARB1 allows E2 exposure and binding of E2 to SCARB1 and the tetraspanin CD81. E1/E2 heterodimer binding on CD81 activates the epithelial growth factor receptor (EGFR) signaling pathway. Diffusion of the complex E1/E2-EGFR-SCARB1-CD81 to the cell lateral membrane allows further interaction with Claudin 1 (CLDN1) and occludin (OCLN) to finally trigger HCV entry. Inhibits host EIF2AK2/PKR activation, preventing the establishment of an antiviral state. Viral ligand for CD209/DC-SIGN and CLEC4M/DC-SIGNR, which are respectively found on DCs, and on liver sinusoidal endothelial cells and macrophage-like cells of lymph node sinuses. These interactions allow the capture of circulating HCV particles by these cells and subsequent facilitated transmission to permissive cells such as hepatocytes and lymphocyte subpopulations. The interaction between E2 and host amino acid transporter complex formed by SLC3A2 and SLC7A5/LAT1 may facilitate viral entry into host cell. Its function is as follows. Ion channel protein that acts as a viroporin and plays an essential role in the assembly, envelopment and secretion of viral particles. Participates in virus envelopment by coordinating the encounter between NS5A and NS2-based assembly sites loaded with E1/E2 heterodimer, which subsequently leads to nucleocapsid envelopment. Creates a pore in acidic organelles and releases Ca(2+) and H(+) in the cytoplasm of infected cells, leading to a productive viral infection. High levels of cytoplasmic Ca(2+) may trigger membrane trafficking and transport of viral ER-associated proteins to viroplasms, sites of viral genome replication. The release of Ca(2+) may also activate the inflamasome leading to chronic inflammation. Targets also host mitochondria and induces mitochondrial depolarization. In addition of its role as a viroporin, acts as a lipid raft adhesion factor. Cysteine protease required for the proteolytic auto-cleavage between the non-structural proteins NS2 and NS3. The N-terminus of NS3 is required for the function of NS2 protease (active region NS2-3). Promotes the initiation of viral particle assembly by mediating the interaction between structural and non-structural proteins. In terms of biological role, displays three enzymatic activities: serine protease with a chymotrypsin-like fold, NTPase and RNA helicase. NS3 serine protease, in association with NS4A, is responsible for the cleavages of NS3-NS4A, NS4A-NS4B, NS4B-NS5A and NS5A-NS5B. The NS3/NS4A complex prevents phosphorylation of host IRF3, thus preventing the establishment of dsRNA induced antiviral state. The NS3/NS4A complex induces host amino acid transporter component SLC3A2, thus contributing to HCV propagation. NS3 RNA helicase binds to RNA and unwinds both dsDNA and dsRNA in the 3' to 5' direction, and likely resolves RNA complicated stable secondary structures in the template strand. Binds a single ATP and catalyzes the unzipping of a single base pair of dsRNA. Inhibits host antiviral proteins TBK1 and IRF3 thereby preventing the establishment of an antiviral state. Cleaves host MAVS/CARDIF thereby preventing the establishment of an antiviral state. Cleaves host TICAM1/TRIF, thereby disrupting TLR3 signaling and preventing the establishment of an antiviral state. Functionally, peptide cofactor which forms a non-covalent complex with the N-terminal of NS3 serine protease. The NS3/NS4A complex prevents phosphorylation of host IRF3, thus preventing the establishment of dsRNA induced antiviral state. The NS3/NS4A complex induces host amino acid transporter component SLC3A2, thus contributing to HCV propagation. Its function is as follows. Induces a specific membrane alteration that serves as a scaffold for the virus replication complex. This membrane alteration gives rise to the so-called ER-derived membranous web that contains the replication complex. NS4B self-interaction contributes to its function in membranous web formation. Promotes host TRIF protein degradation in a CASP8-dependent manner thereby inhibiting host TLR3-mediated interferon signaling. Disrupts the interaction between STING and TBK1 contributing to the inhibition of interferon signaling. Phosphorylated protein that is indispensable for viral replication and assembly. Both hypo- and hyperphosphorylated states are required for the viral life cycle. The hyperphosphorylated form of NS5A is an inhibitor of viral replication. Involved in RNA-binding and especially in binding to the viral genome. Zinc is essential for RNA-binding. Participates in the viral particle production as a result of its interaction with the viral mature core protein. Its interaction with host VAPB may target the viral replication complex to vesicles. Down-regulates viral IRES translation initiation. Mediates interferon resistance, presumably by interacting with and inhibiting host EIF2AK2/PKR. Prevents BIN1-induced apoptosis. Acts as a transcriptional activator of some host genes important for viral replication when localized in the nucleus. Via the interaction with host PACSIN2, modulates lipid droplet formation in order to promote virion assembly. Modulates TNFRSF21/DR6 signaling pathway for viral propagation. In terms of biological role, RNA-dependent RNA polymerase that performs primer-template recognition and RNA synthesis during viral replication. Initiates RNA transcription/replication at a flavin adenine dinucleotide (FAD), resulting in a 5'- FAD cap on viral RNAs. In this way, recognition of viral 5' RNA by host pattern recognition receptors can be bypassed, thereby evading activation of antiviral pathways. The chain is Genome polyprotein from Homo sapiens (Human).